The following is a 192-amino-acid chain: Imidazoleglycerol-phosphate dehydratase (192 aa).

This sequence belongs to the imidazoleglycerol-phosphate dehydratase family.

The protein resides in the cytoplasm. The enzyme catalyses D-erythro-1-(imidazol-4-yl)glycerol 3-phosphate = 3-(imidazol-4-yl)-2-oxopropyl phosphate + H2O. Its pathway is amino-acid biosynthesis; L-histidine biosynthesis; L-histidine from 5-phospho-alpha-D-ribose 1-diphosphate: step 6/9. The polypeptide is Imidazoleglycerol-phosphate dehydratase (Carboxydothermus hydrogenoformans (strain ATCC BAA-161 / DSM 6008 / Z-2901)).